A 404-amino-acid chain; its full sequence is Serine/threonine transporter SstT (404 aa).

8 helical membrane passes run 17 to 37, 39 to 59, 75 to 95, 138 to 158, 179 to 199, 212 to 232, 287 to 307, and 313 to 333; these read IGIGVVIGVMLGILAPDLTGF, ILGKLFVGGLKAIAPLLVFAL, MTLIIVLYLFGTFASALVAVL, ALATANYIGVLSWAIIFGLAL, IVVWIINLAPIGIMSLVFTTI, FLILVLVGTMVFVALVVNPLI, IPLGATINMGGAAITINVLTL, and FGIPIDFLTALLLSVVAAVSA.

It belongs to the dicarboxylate/amino acid:cation symporter (DAACS) (TC 2.A.23) family.

The protein localises to the cell membrane. It carries out the reaction L-serine(in) + Na(+)(in) = L-serine(out) + Na(+)(out). The catalysed reaction is L-threonine(in) + Na(+)(in) = L-threonine(out) + Na(+)(out). Its function is as follows. Involved in the import of serine and threonine into the cell, with the concomitant import of sodium (symport system). The chain is Serine/threonine transporter SstT from Streptococcus pyogenes serotype M12 (strain MGAS2096).